Here is a 366-residue protein sequence, read N- to C-terminus: Acetylserotonin O-methyltransferase 2 (366 aa).

S-adenosyl-L-homocysteine-binding residues include glycine 209, aspartate 232, aspartate 253, and lysine 267. Residue histidine 271 is the Proton acceptor of the active site. Active-site residues include glutamate 302 and glutamate 332.

This sequence belongs to the class I-like SAM-binding methyltransferase superfamily. Cation-independent O-methyltransferase family. Homodimer. In terms of tissue distribution, expressed in roots, leaves, stems and flowers.

It localises to the cytoplasm. It catalyses the reaction N-acetylserotonin + S-adenosyl-L-methionine = melatonin + S-adenosyl-L-homocysteine + H(+). Its pathway is aromatic compound metabolism; melatonin biosynthesis; melatonin from serotonin: step 1/2. Functionally, methyltransferase which catalyzes the transfer of a methyl group onto N-acetylserotonin, producing melatonin (N-acetyl-5-methoxytryptamine). This Oryza sativa subsp. japonica (Rice) protein is Acetylserotonin O-methyltransferase 2.